A 400-amino-acid polypeptide reads, in one-letter code: Nicotinate phosphoribosyltransferase (400 aa).

H220 carries the phosphohistidine; by autocatalysis modification.

This sequence belongs to the NAPRTase family. Post-translationally, transiently phosphorylated on a His residue during the reaction cycle. Phosphorylation strongly increases the affinity for substrates and increases the rate of nicotinate D-ribonucleotide production. Dephosphorylation regenerates the low-affinity form of the enzyme, leading to product release.

It catalyses the reaction nicotinate + 5-phospho-alpha-D-ribose 1-diphosphate + ATP + H2O = nicotinate beta-D-ribonucleotide + ADP + phosphate + diphosphate. Its pathway is cofactor biosynthesis; NAD(+) biosynthesis; nicotinate D-ribonucleotide from nicotinate: step 1/1. Its function is as follows. Catalyzes the synthesis of beta-nicotinate D-ribonucleotide from nicotinate and 5-phospho-D-ribose 1-phosphate at the expense of ATP. This Enterobacter sp. (strain 638) protein is Nicotinate phosphoribosyltransferase.